Consider the following 196-residue polypeptide: Fe/S biogenesis protein NfuA (196 aa).

Residues C154 and C157 each coordinate [4Fe-4S] cluster.

The protein belongs to the NfuA family. As to quaternary structure, homodimer. The cofactor is [4Fe-4S] cluster.

Its function is as follows. Involved in iron-sulfur cluster biogenesis. Binds a 4Fe-4S cluster, can transfer this cluster to apoproteins, and thereby intervenes in the maturation of Fe/S proteins. Could also act as a scaffold/chaperone for damaged Fe/S proteins. This is Fe/S biogenesis protein NfuA from Blochmanniella pennsylvanica (strain BPEN).